The primary structure comprises 201 residues: Large ribosomal subunit protein uL4 (201 aa).

Residues 45–66 (AQKSRAEVVGSNKKPWRQKGTG) form a disordered region.

Belongs to the universal ribosomal protein uL4 family. In terms of assembly, part of the 50S ribosomal subunit.

Its function is as follows. One of the primary rRNA binding proteins, this protein initially binds near the 5'-end of the 23S rRNA. It is important during the early stages of 50S assembly. It makes multiple contacts with different domains of the 23S rRNA in the assembled 50S subunit and ribosome. In terms of biological role, forms part of the polypeptide exit tunnel. In Baumannia cicadellinicola subsp. Homalodisca coagulata, this protein is Large ribosomal subunit protein uL4.